We begin with the raw amino-acid sequence, 364 residues long: UDP-N-acetylglucosamine--N-acetylmuramyl-(pentapeptide) pyrophosphoryl-undecaprenol N-acetylglucosamine transferase (364 aa).

UDP-N-acetyl-alpha-D-glucosamine-binding positions include 15–17 (TGG), Asn-123, Arg-164, Ser-191, and Gln-286.

It belongs to the glycosyltransferase 28 family. MurG subfamily.

It localises to the cell inner membrane. It catalyses the reaction di-trans,octa-cis-undecaprenyl diphospho-N-acetyl-alpha-D-muramoyl-L-alanyl-D-glutamyl-meso-2,6-diaminopimeloyl-D-alanyl-D-alanine + UDP-N-acetyl-alpha-D-glucosamine = di-trans,octa-cis-undecaprenyl diphospho-[N-acetyl-alpha-D-glucosaminyl-(1-&gt;4)]-N-acetyl-alpha-D-muramoyl-L-alanyl-D-glutamyl-meso-2,6-diaminopimeloyl-D-alanyl-D-alanine + UDP + H(+). It participates in cell wall biogenesis; peptidoglycan biosynthesis. Cell wall formation. Catalyzes the transfer of a GlcNAc subunit on undecaprenyl-pyrophosphoryl-MurNAc-pentapeptide (lipid intermediate I) to form undecaprenyl-pyrophosphoryl-MurNAc-(pentapeptide)GlcNAc (lipid intermediate II). This Prochlorococcus marinus (strain MIT 9515) protein is UDP-N-acetylglucosamine--N-acetylmuramyl-(pentapeptide) pyrophosphoryl-undecaprenol N-acetylglucosamine transferase.